Reading from the N-terminus, the 274-residue chain is Dermonecrotic toxin LcsSicTox-betaIC1 (274 aa).

The active site involves H5. Residues E25 and D27 each coordinate Mg(2+). Catalysis depends on H41, which acts as the Nucleophile. 2 disulfides stabilise this stretch: C45–C51 and C47–C190. Residue N66 is glycosylated (N-linked (GlcNAc...) asparagine). A Mg(2+)-binding site is contributed by D85.

It belongs to the arthropod phospholipase D family. Class II subfamily. It depends on Mg(2+) as a cofactor. Expressed by the venom gland.

Its subcellular location is the secreted. It catalyses the reaction an N-(acyl)-sphingosylphosphocholine = an N-(acyl)-sphingosyl-1,3-cyclic phosphate + choline. The catalysed reaction is an N-(acyl)-sphingosylphosphoethanolamine = an N-(acyl)-sphingosyl-1,3-cyclic phosphate + ethanolamine. The enzyme catalyses a 1-acyl-sn-glycero-3-phosphocholine = a 1-acyl-sn-glycero-2,3-cyclic phosphate + choline. It carries out the reaction a 1-acyl-sn-glycero-3-phosphoethanolamine = a 1-acyl-sn-glycero-2,3-cyclic phosphate + ethanolamine. Dermonecrotic toxins cleave the phosphodiester linkage between the phosphate and headgroup of certain phospholipids (sphingolipid and lysolipid substrates), forming an alcohol (often choline) and a cyclic phosphate. This toxin acts on sphingomyelin (SM). It may also act on ceramide phosphoethanolamine (CPE), lysophosphatidylcholine (LPC) and lysophosphatidylethanolamine (LPE), but not on lysophosphatidylserine (LPS), and lysophosphatidylglycerol (LPG). It acts by transphosphatidylation, releasing exclusively cyclic phosphate products as second products. Induces dermonecrosis, hemolysis, increased vascular permeability, edema, inflammatory response, and platelet aggregation. This chain is Dermonecrotic toxin LcsSicTox-betaIC1, found in Loxosceles cf. spinulosa (strain GJB-2008) (Recluse spider).